A 148-amino-acid chain; its full sequence is Large ribosomal subunit protein uL15 (148 aa).

The span at 1–28 (MIRRRKKVRKLRGSHTHGWGCKKKHRGG) shows a compositional bias: basic residues. The disordered stretch occupies residues 1–43 (MIRRRKKVRKLRGSHTHGWGCKKKHRGGGSKGGRGMAGTGKRK). A compositionally biased stretch (gly residues) spans 29-38 (GSKGGRGMAG).

The protein belongs to the universal ribosomal protein uL15 family. Part of the 50S ribosomal subunit.

In terms of biological role, binds to the 23S rRNA. The protein is Large ribosomal subunit protein uL15 of Thermococcus kodakarensis (strain ATCC BAA-918 / JCM 12380 / KOD1) (Pyrococcus kodakaraensis (strain KOD1)).